A 569-amino-acid chain; its full sequence is Cationic amino acid transporter 5 (569 aa).

Residues 1–67 (MEGEERGYWR…KQSEHEMKRC (67 aa)) lie on the Cytoplasmic side of the membrane. Residues 68–88 (LTWWDLVWFGFGSVIGAGIFV) form a helical membrane-spanning segment. Residues 89-97 (LTGQEAHEQ) lie on the Extracellular side of the membrane. A helical membrane pass occupies residues 98 to 118 (AGPAIVLSYVVSGLSAMLSVF). Residues 119–143 (CYTEFAVEIPVAGGSFAYLRIELGD) are Cytoplasmic-facing. Residues 144 to 164 (FAAFITAGNILLESIVGTAAV) traverse the membrane as a helical segment. Residues 165–192 (ARAWTSYFATLLNRSPNALRIKTDLSSG) are Extracellular-facing. A helical transmembrane segment spans residues 193 to 213 (FNLLDPIAVVVIAASATIASI). Topologically, residues 214–222 (STRKTSLLN) are cytoplasmic. The chain crosses the membrane as a helical span at residues 223–243 (WIASAINTLVIFFVIIAGFIH). The Extracellular segment spans residues 244-251 (ADTSNLTP). A helical transmembrane segment spans residues 252–272 (FLPFGPEGVFRAAAVVYFAYG). At 273–290 (GFDSIATMAEETKNPSRD) the chain is on the cytoplasmic side. Residues 291–311 (IPIGLLGSMSIITVIYCLMAL) form a helical membrane-spanning segment. The Extracellular segment spans residues 312-341 (SLSMMQKYTDIDPNAAYSVAFQSVGMKWGK). A helical transmembrane segment spans residues 342 to 362 (YLVALGALKGMTTVLLVGALG). Over 363 to 389 (QARYVTHIARTHMIPPIFALVHPKTGT) the chain is Cytoplasmic. Residues 390 to 410 (PINANLLVAIPSALIAFFSGL) form a helical membrane-spanning segment. Residue Asp411 is a topological domain, extracellular. The chain crosses the membrane as a helical span at residues 412 to 432 (VLASLLSISTLFIFTMMPIAL). The Cytoplasmic portion of the chain corresponds to 433 to 450 (LVRRYYVRQDTPRVHLIK). The helical transmembrane segment at 451 to 471 (LITCLLFVVVSSMGTSAYWGM) threads the bilayer. The Extracellular portion of the chain corresponds to 472–477 (QRKGSW). A helical membrane pass occupies residues 478-498 (IGYTVTVPFWFLGTLGIVFFV). Topologically, residues 499–505 (PQQRTPK) are cytoplasmic. The chain crosses the membrane as a helical span at residues 506-526 (VWGVPLVPWLPCLSIATNIFL). Residues 527 to 537 (MGSLGAMAFVR) lie on the Extracellular side of the membrane. Residues 538–558 (FGVCTLAMLLYYFLLGLHATF) traverse the membrane as a helical segment. Residues 559 to 569 (DMAHQQIVPRT) are Cytoplasmic-facing.

The protein belongs to the amino acid-polyamine-organocation (APC) superfamily. Cationic amino acid transporter (CAT) (TC 2.A.3.3) family. Expressed in roots, stems, flowers, seeds, and leaves. Mostly present in leaf rims and cotyledons of developing seedlings.

It localises to the cell membrane. Its function is as follows. High-affinity permease involved in the transport of the cationic amino acids (e.g. arginine, and, to a lower extent, citrulline and glutamate). Transport mostly basic amino acids, and, to a lower extent neutral and acidic amino acids. This chain is Cationic amino acid transporter 5 (CAT5), found in Arabidopsis thaliana (Mouse-ear cress).